A 156-amino-acid polypeptide reads, in one-letter code: Small ribosomal subunit protein uS7 (156 aa).

The protein belongs to the universal ribosomal protein uS7 family. In terms of assembly, part of the 30S ribosomal subunit. Contacts proteins S9 and S11.

Its function is as follows. One of the primary rRNA binding proteins, it binds directly to 16S rRNA where it nucleates assembly of the head domain of the 30S subunit. Is located at the subunit interface close to the decoding center, probably blocks exit of the E-site tRNA. The chain is Small ribosomal subunit protein uS7 from Natranaerobius thermophilus (strain ATCC BAA-1301 / DSM 18059 / JW/NM-WN-LF).